Here is a 445-residue protein sequence, read N- to C-terminus: Phosphatidate cytidylyltransferase 2 (445 aa).

Positions 1–39 (MTELRQRVAREPEAPPEDKESESEAKADGETASDSESRV) are enriched in basic and acidic residues. A disordered region spans residues 1-52 (MTELRQRVAREPEAPPEDKESESEAKADGETASDSESRVEAVTQPPSADDTP). Ser21 bears the Phosphoserine mark. A Phosphothreonine modification is found at Thr31. Residues Ser33, Ser35, and Ser37 each carry the phosphoserine modification. A Phosphothreonine modification is found at Thr51. The next 6 membrane-spanning stretches (helical) occupy residues 79-99 (MIAFFFIIIYLGPMVLMMIVM), 132-152 (FLLCVNYFFYGETVTDYFFTL), 166-186 (HRFISFTLYLTGFCMFVLSLV), 213-233 (LVIHNLFEGMIWFIVPISCVI), 262-282 (GFIGGFFATVVFGLLLSYVMS), and 340-360 (IALSTFASLIGPFGGFFASGF).

Belongs to the CDS family. Homodimer.

The protein localises to the endoplasmic reticulum membrane. The catalysed reaction is a 1,2-diacyl-sn-glycero-3-phosphate + CTP + H(+) = a CDP-1,2-diacyl-sn-glycerol + diphosphate. It catalyses the reaction 1-octadecanoyl-2-(5Z,8Z,11Z,14Z-eicosatetraenoyl)-sn-glycero-3-phosphate + CTP + H(+) = 1-octadecanoyl-2-(5Z,8Z,11Z,14Z-eicosatetraenoyl)-sn-glycero-3-cytidine-5'-diphosphate + diphosphate. The enzyme catalyses 1-octadecanoyl-2-(9Z,12Z-octadecadienoyl)-sn-glycero-3-phosphate + CTP + H(+) = 1-octadecanoyl-2-(9Z,12Z-octadecadienoyl)-sn-glycero-3-cytidine-5'-diphosphate + diphosphate. It carries out the reaction 1-hexadecanoyl-2-(5Z,8Z,11Z,14Z-eicosatetraenoyl)-sn-glycero-3-phosphate + CTP + H(+) = 1-hexadecanoyl-2-(5Z,8Z,11Z,14Z-eicosatetraenoyl)-sn-glycero-3-cytidine-5'-diphosphate + diphosphate. The catalysed reaction is 1,2-di-(5Z,8Z,11Z,14Z)-eicosatetraenoyl-sn-glycero-3-phosphate + CTP + H(+) = 1,2-di-(5Z,8Z,11Z,14Z-eicosatetraenoyl)-sn-glycero-3-cytidine-5'-diphosphate + diphosphate. It catalyses the reaction 1-octadecanoyl-2-(9Z-octadecenoyl)-sn-glycero-3-phosphate + CTP + H(+) = 1-octadecanoyl-2-(9Z-octadecenoyl)-sn-glycero-3-cytidine-5'-diphosphate + diphosphate. The enzyme catalyses 1-octadecanoyl-2-(4Z,7Z,10Z,13Z,16Z,19Z-docosahexaenoyl)-sn-glycero-3-phosphate + CTP + H(+) = 1-octadecanoyl-2-(4Z,7Z,10Z,13Z,16Z,19Z-docosahexaenoyl)-sn-glycero-3-cytidine-5'-diphosphate + diphosphate. It carries out the reaction 1,2-di-(9Z,12Z-octadecadienoyl)-sn-glycero-3-phosphate + CTP + H(+) = 1,2-di-(9Z,12Z-octadecadienoyl)-sn-glycero-3-cytidine-5'-diphosphate + diphosphate. The catalysed reaction is 1,2-di-(9Z-octadecenoyl)-sn-glycero-3-phosphate + CTP + H(+) = 1,2-di-(9Z-octadecenoyl)-sn-glycero-3-cytidine-5'-diphosphate + diphosphate. Its pathway is phospholipid metabolism; CDP-diacylglycerol biosynthesis; CDP-diacylglycerol from sn-glycerol 3-phosphate: step 3/3. In terms of biological role, catalyzes the conversion of phosphatidic acid (PA) to CDP-diacylglycerol (CDP-DAG), an essential intermediate in the synthesis of phosphatidylglycerol, cardiolipin and phosphatidylinositol. Exhibits specificity for the nature of the acyl chains at the sn-1 and sn-2 positions in the substrate, PA and the preferred acyl chain composition is 1-stearoyl-2-arachidonoyl-sn-phosphatidic acid. Plays an important role in regulating the growth and maturation of lipid droplets which are storage organelles at the center of lipid and energy homeostasis. In Bos taurus (Bovine), this protein is Phosphatidate cytidylyltransferase 2 (CDS2).